The primary structure comprises 170 residues: Shikimate kinase (170 aa).

15–20 (GAGKTT) lines the ATP pocket. Residue Thr19 participates in Mg(2+) binding. Asp37, Arg61, and Gly83 together coordinate substrate. Arg121 is a binding site for ATP. Residue Arg140 participates in substrate binding.

This sequence belongs to the shikimate kinase family. In terms of assembly, monomer. It depends on Mg(2+) as a cofactor.

It is found in the cytoplasm. It catalyses the reaction shikimate + ATP = 3-phosphoshikimate + ADP + H(+). The protein operates within metabolic intermediate biosynthesis; chorismate biosynthesis; chorismate from D-erythrose 4-phosphate and phosphoenolpyruvate: step 5/7. Functionally, catalyzes the specific phosphorylation of the 3-hydroxyl group of shikimic acid using ATP as a cosubstrate. The chain is Shikimate kinase from Neisseria meningitidis serogroup C (strain 053442).